A 472-amino-acid chain; its full sequence is Glutamate--tRNA ligase 1 (472 aa).

The 'HIGH' region signature appears at 13–23; the sequence is PSPTGYLHIGG. Residues Cys102, Cys104, Cys129, and Glu131 each contribute to the Zn(2+) site. The short motif at 239–243 is the 'KMSKS' region element; that stretch reads RLSKR. Lys242 is a binding site for ATP.

It belongs to the class-I aminoacyl-tRNA synthetase family. Glutamate--tRNA ligase type 1 subfamily. In terms of assembly, monomer. Zn(2+) is required as a cofactor.

The protein resides in the cytoplasm. It carries out the reaction tRNA(Glu) + L-glutamate + ATP = L-glutamyl-tRNA(Glu) + AMP + diphosphate. In terms of biological role, catalyzes the attachment of glutamate to tRNA(Glu) in a two-step reaction: glutamate is first activated by ATP to form Glu-AMP and then transferred to the acceptor end of tRNA(Glu). The protein is Glutamate--tRNA ligase 1 of Syntrophus aciditrophicus (strain SB).